The sequence spans 242 residues: Ribosomal RNA large subunit methyltransferase E (242 aa).

Glycine 64, tryptophan 66, aspartate 84, aspartate 100, and aspartate 125 together coordinate S-adenosyl-L-methionine. The active-site Proton acceptor is lysine 165. Residues 198 to 242 (SSETFLLGRGLKKASPNGLDSRSGTAAEPAPLVPIGTNSMPANGD) form a disordered region. Residues 233–242 (GTNSMPANGD) are compositionally biased toward polar residues.

This sequence belongs to the class I-like SAM-binding methyltransferase superfamily. RNA methyltransferase RlmE family.

It is found in the cytoplasm. The enzyme catalyses uridine(2552) in 23S rRNA + S-adenosyl-L-methionine = 2'-O-methyluridine(2552) in 23S rRNA + S-adenosyl-L-homocysteine + H(+). In terms of biological role, specifically methylates the uridine in position 2552 of 23S rRNA at the 2'-O position of the ribose in the fully assembled 50S ribosomal subunit. The chain is Ribosomal RNA large subunit methyltransferase E from Verminephrobacter eiseniae (strain EF01-2).